A 154-amino-acid chain; its full sequence is Probable deoxyuridine 5'-triphosphate nucleotidohydrolase (154 aa).

It belongs to the dCTP deaminase family. Archaeal dUTPase subfamily.

It carries out the reaction dUTP + H2O = dUMP + diphosphate + H(+). It participates in pyrimidine metabolism; dUMP biosynthesis; dUMP from dCTP (dUTP route): step 2/2. This enzyme is involved in nucleotide metabolism: it produces dUMP, the immediate precursor of thymidine nucleotides and it decreases the intracellular concentration of dUTP so that uracil cannot be incorporated into DNA. This chain is Probable deoxyuridine 5'-triphosphate nucleotidohydrolase, found in Methanopyrus kandleri (strain AV19 / DSM 6324 / JCM 9639 / NBRC 100938).